The sequence spans 363 residues: MNASAAALNESQVVAVAAEGAAAAATAAGAPDTGEWGPPAASAALGGGGGPNGSLELSSQLPAGPSGLLLSAVNPWDVLLCVSGTVIAGENALVVALIASTPALRTPMFVLVGSLATADLLAGCGLILHFVFQYVVPSETVSLLMVGFLVASFAASVSSLLAITVDRYLSLYNALTYYSRRTLLGVHLLLAATWTVSLGLGLLPVLGWNCLADRTSCSVVRPLTRSHVALLSTSFFVVFGIMLHLYVRICQVVWRHAHQIALQQHCLAPPHLAATRKGVGTLAVVLGTFGASWLPFAIYCVVGSQEDPAIYTYATLLPATYNSMINPIIYAFRNQEIQRALWLLFCGCFQSKVPFRSRSPSEV.

At 1 to 75 (MNASAAALNE…SGLLLSAVNP (75 aa)) the chain is on the extracellular side. 2 N-linked (GlcNAc...) asparagine glycosylation sites follow: asparagine 2 and asparagine 9. A disordered region spans residues 29–48 (GAPDTGEWGPPAASAALGGG). A glycan (N-linked (GlcNAc...) asparagine) is linked at asparagine 52. The chain crosses the membrane as a helical span at residues 76–95 (WDVLLCVSGTVIAGENALVV). The Cytoplasmic segment spans residues 96–107 (ALIASTPALRTP). The chain crosses the membrane as a helical span at residues 108-131 (MFVLVGSLATADLLAGCGLILHFV). Over 132 to 143 (FQYVVPSETVSL) the chain is Extracellular. The chain crosses the membrane as a helical span at residues 144 to 165 (LMVGFLVASFAASVSSLLAITV). Topologically, residues 166-186 (DRYLSLYNALTYYSRRTLLGV) are cytoplasmic. A helical transmembrane segment spans residues 187–206 (HLLLAATWTVSLGLGLLPVL). Topologically, residues 207–231 (GWNCLADRTSCSVVRPLTRSHVALL) are extracellular. Residues 232 to 250 (STSFFVVFGIMLHLYVRIC) traverse the membrane as a helical segment. Residues 251 to 278 (QVVWRHAHQIALQQHCLAPPHLAATRKG) are Cytoplasmic-facing. The helical transmembrane segment at 279-305 (VGTLAVVLGTFGASWLPFAIYCVVGSQ) threads the bilayer. Residues 306–310 (EDPAI) are Extracellular-facing. Residues 311–332 (YTYATLLPATYNSMINPIIYAF) traverse the membrane as a helical segment. Topologically, residues 333 to 363 (RNQEIQRALWLLFCGCFQSKVPFRSRSPSEV) are cytoplasmic. A lipid anchor (S-palmitoyl cysteine) is attached at cysteine 346. 3 positions are modified to phosphoserine: serine 357, serine 359, and serine 361.

The protein belongs to the G-protein coupled receptor 1 family. Mainly expressed in the brain. Selectively expressed in striatopallidal neurons in the striatum.

It localises to the cell membrane. Its function is as follows. Orphan receptor with constitutive G(s) signaling activity that activate cyclic AMP. Promotes neurite outgrowth and blocks myelin inhibition in neurons. The chain is G-protein coupled receptor 6 (Gpr6) from Mus musculus (Mouse).